Reading from the N-terminus, the 175-residue chain is NADH-ubiquinone oxidoreductase chain 6 (175 aa).

A run of 6 helical transmembrane segments spans residues 1–21 (MMYI…GFSS), 24–44 (SPVY…GIIM), 51–71 (LGLV…GYTI), 87–107 (VVLS…VWLF), 113–133 (LVGF…GSFG), and 148–168 (YGFW…FIAI).

It belongs to the complex I subunit 6 family. As to quaternary structure, core subunit of respiratory chain NADH dehydrogenase (Complex I) which is composed of 45 different subunits.

It is found in the mitochondrion inner membrane. The enzyme catalyses a ubiquinone + NADH + 5 H(+)(in) = a ubiquinol + NAD(+) + 4 H(+)(out). Its function is as follows. Core subunit of the mitochondrial membrane respiratory chain NADH dehydrogenase (Complex I) which catalyzes electron transfer from NADH through the respiratory chain, using ubiquinone as an electron acceptor. Essential for the catalytic activity and assembly of complex I. This chain is NADH-ubiquinone oxidoreductase chain 6 (MT-ND6), found in Mammuthus primigenius (Siberian woolly mammoth).